Here is a 25-residue protein sequence, read N- to C-terminus: Pregnancy-associated glycoprotein 59g (25 aa).

The N-linked (GlcNAc...) asparagine glycan is linked to N4.

This sequence belongs to the peptidase A1 family. In terms of tissue distribution, highly expressed in the placenta between day 60 and day 100 of gestation.

The protein localises to the secreted. Its subcellular location is the extracellular space. The sequence is that of Pregnancy-associated glycoprotein 59g from Ovis aries (Sheep).